A 94-amino-acid polypeptide reads, in one-letter code: Pyrimidine/purine nucleoside phosphorylase (94 aa).

The protein belongs to the nucleoside phosphorylase PpnP family.

It carries out the reaction a purine D-ribonucleoside + phosphate = a purine nucleobase + alpha-D-ribose 1-phosphate. The catalysed reaction is adenosine + phosphate = alpha-D-ribose 1-phosphate + adenine. The enzyme catalyses cytidine + phosphate = cytosine + alpha-D-ribose 1-phosphate. It catalyses the reaction guanosine + phosphate = alpha-D-ribose 1-phosphate + guanine. It carries out the reaction inosine + phosphate = alpha-D-ribose 1-phosphate + hypoxanthine. The catalysed reaction is thymidine + phosphate = 2-deoxy-alpha-D-ribose 1-phosphate + thymine. The enzyme catalyses uridine + phosphate = alpha-D-ribose 1-phosphate + uracil. It catalyses the reaction xanthosine + phosphate = alpha-D-ribose 1-phosphate + xanthine. Functionally, catalyzes the phosphorolysis of diverse nucleosides, yielding D-ribose 1-phosphate and the respective free bases. Can use uridine, adenosine, guanosine, cytidine, thymidine, inosine and xanthosine as substrates. Also catalyzes the reverse reactions. The polypeptide is Pyrimidine/purine nucleoside phosphorylase (Shigella dysenteriae serotype 1 (strain Sd197)).